A 381-amino-acid polypeptide reads, in one-letter code: UDP-4-amino-4-deoxy-L-arabinose--oxoglutarate aminotransferase (381 aa).

Residue lysine 182 is modified to N6-(pyridoxal phosphate)lysine.

The protein belongs to the DegT/DnrJ/EryC1 family. ArnB subfamily. In terms of assembly, homodimer. Pyridoxal 5'-phosphate serves as cofactor.

The enzyme catalyses UDP-4-amino-4-deoxy-beta-L-arabinose + 2-oxoglutarate = UDP-beta-L-threo-pentopyranos-4-ulose + L-glutamate. It participates in nucleotide-sugar biosynthesis; UDP-4-deoxy-4-formamido-beta-L-arabinose biosynthesis; UDP-4-deoxy-4-formamido-beta-L-arabinose from UDP-alpha-D-glucuronate: step 2/3. The protein operates within bacterial outer membrane biogenesis; lipopolysaccharide biosynthesis. In terms of biological role, catalyzes the conversion of UDP-4-keto-arabinose (UDP-Ara4O) to UDP-4-amino-4-deoxy-L-arabinose (UDP-L-Ara4N). The modified arabinose is attached to lipid A and is required for resistance to polymyxin and cationic antimicrobial peptides. This Photorhabdus laumondii subsp. laumondii (strain DSM 15139 / CIP 105565 / TT01) (Photorhabdus luminescens subsp. laumondii) protein is UDP-4-amino-4-deoxy-L-arabinose--oxoglutarate aminotransferase.